Consider the following 65-residue polypeptide: Large ribosomal subunit protein bL35 (65 aa).

The interval 1–28 (MPKIKTNRGAAKRFRKTGSGKIRRNKAF) is disordered. Residues 10-26 (AAKRFRKTGSGKIRRNK) show a composition bias toward basic residues.

Belongs to the bacterial ribosomal protein bL35 family.

This chain is Large ribosomal subunit protein bL35, found in Syntrophotalea carbinolica (strain DSM 2380 / NBRC 103641 / GraBd1) (Pelobacter carbinolicus).